Consider the following 367-residue polypeptide: Chorismate synthase (367 aa).

Arginine 48 serves as a coordination point for NADP(+). FMN-binding positions include 125–127 (RSS), 243–244 (NA), glycine 283, 298–302 (KPTSS), and arginine 324.

It belongs to the chorismate synthase family. Homotetramer. It depends on FMNH2 as a cofactor.

It carries out the reaction 5-O-(1-carboxyvinyl)-3-phosphoshikimate = chorismate + phosphate. The protein operates within metabolic intermediate biosynthesis; chorismate biosynthesis; chorismate from D-erythrose 4-phosphate and phosphoenolpyruvate: step 7/7. In terms of biological role, catalyzes the anti-1,4-elimination of the C-3 phosphate and the C-6 proR hydrogen from 5-enolpyruvylshikimate-3-phosphate (EPSP) to yield chorismate, which is the branch point compound that serves as the starting substrate for the three terminal pathways of aromatic amino acid biosynthesis. This reaction introduces a second double bond into the aromatic ring system. The protein is Chorismate synthase of Psychrobacter cryohalolentis (strain ATCC BAA-1226 / DSM 17306 / VKM B-2378 / K5).